Consider the following 199-residue polypeptide: uncharacterized protein (199 aa).

A G-patch domain is found at 112 to 160 (PKSLGYRVLSQYGWSPQGDTAGLGLENQGRRAPVRAFRVKNDTIGLGTK).

This is an uncharacterized protein from Schizosaccharomyces pombe (strain 972 / ATCC 24843) (Fission yeast).